The following is a 174-amino-acid chain: ATP synthase subunit b (174 aa).

A helical membrane pass occupies residues 18–38 (IIVVSGSFLILMFLLKHFAWG).

This sequence belongs to the ATPase B chain family. In terms of assembly, F-type ATPases have 2 components, F(1) - the catalytic core - and F(0) - the membrane proton channel. F(1) has five subunits: alpha(3), beta(3), gamma(1), delta(1), epsilon(1). F(0) has three main subunits: a(1), b(2) and c(10-14). The alpha and beta chains form an alternating ring which encloses part of the gamma chain. F(1) is attached to F(0) by a central stalk formed by the gamma and epsilon chains, while a peripheral stalk is formed by the delta and b chains.

Its subcellular location is the cell membrane. Functionally, f(1)F(0) ATP synthase produces ATP from ADP in the presence of a proton or sodium gradient. F-type ATPases consist of two structural domains, F(1) containing the extramembraneous catalytic core and F(0) containing the membrane proton channel, linked together by a central stalk and a peripheral stalk. During catalysis, ATP synthesis in the catalytic domain of F(1) is coupled via a rotary mechanism of the central stalk subunits to proton translocation. In terms of biological role, component of the F(0) channel, it forms part of the peripheral stalk, linking F(1) to F(0). The chain is ATP synthase subunit b from Enterococcus hirae (strain ATCC 9790 / DSM 20160 / JCM 8729 / LMG 6399 / NBRC 3181 / NCIMB 6459 / NCDO 1258 / NCTC 12367 / WDCM 00089 / R).